Here is a 261-residue protein sequence, read N- to C-terminus: uncharacterized protein (261 aa).

One can recognise an ABC transporter domain in the interval 1 to 236 (MEIKEITIIG…SRKINEVDNW (236 aa)). Residue 36 to 43 (GPTGSGKS) coordinates ATP.

Belongs to the ABC transporter superfamily.

This is an uncharacterized protein from Methanocaldococcus jannaschii (strain ATCC 43067 / DSM 2661 / JAL-1 / JCM 10045 / NBRC 100440) (Methanococcus jannaschii).